The following is a 260-amino-acid chain: Hydroxyethylthiazole kinase 1 (260 aa).

Residue methionine 39 coordinates substrate. ATP-binding residues include arginine 115 and threonine 160. Glycine 187 is a substrate binding site.

The protein belongs to the Thz kinase family. Mg(2+) serves as cofactor.

It catalyses the reaction 5-(2-hydroxyethyl)-4-methylthiazole + ATP = 4-methyl-5-(2-phosphooxyethyl)-thiazole + ADP + H(+). It functions in the pathway cofactor biosynthesis; thiamine diphosphate biosynthesis; 4-methyl-5-(2-phosphoethyl)-thiazole from 5-(2-hydroxyethyl)-4-methylthiazole: step 1/1. In terms of biological role, catalyzes the phosphorylation of the hydroxyl group of 4-methyl-5-beta-hydroxyethylthiazole (THZ). This is Hydroxyethylthiazole kinase 1 from Streptococcus pneumoniae (strain ATCC 700669 / Spain 23F-1).